Consider the following 290-residue polypeptide: Porphobilinogen deaminase (290 aa).

Position 237 is an S-(dipyrrolylmethanemethyl)cysteine (C237).

It belongs to the HMBS family. Monomer. Requires dipyrromethane as cofactor.

The catalysed reaction is 4 porphobilinogen + H2O = hydroxymethylbilane + 4 NH4(+). It participates in porphyrin-containing compound metabolism; protoporphyrin-IX biosynthesis; coproporphyrinogen-III from 5-aminolevulinate: step 2/4. Tetrapolymerization of the monopyrrole PBG into the hydroxymethylbilane pre-uroporphyrinogen in several discrete steps. This chain is Porphobilinogen deaminase, found in Clostridium botulinum (strain ATCC 19397 / Type A).